A 68-amino-acid chain; its full sequence is Large ribosomal subunit protein uL29 (68 aa).

It belongs to the universal ribosomal protein uL29 family.

The sequence is that of Large ribosomal subunit protein uL29 from Leuconostoc citreum (strain KM20).